The chain runs to 593 residues: ABC1 family protein lscO (593 aa).

2 disordered regions span residues M1–K29 and P441–K467. Composition is skewed to basic and acidic residues over residues M8–T22 and Q457–K467.

Belongs to the protein kinase superfamily. ADCK protein kinase family.

Functionally, ABC1 family protein; part of the gene cluster that mediates the biosynthesis of the lipopeptide antibiotics leucinostatins that show extensive biological activities, including antimalarial, antiviral, antibacterial, antifungal, and antitumor activities, as well as phytotoxic. The function of lcsO within the leucinostatins biosynthesis has not been identified yet. The polypeptide is ABC1 family protein lscO (Purpureocillium lilacinum (Paecilomyces lilacinus)).